The primary structure comprises 908 residues: Translation initiation factor IF-2 (908 aa).

Disordered regions lie at residues 122 to 180 (PVVE…VDDA) and 203 to 267 (EKAR…AVKK). The segment covering 132–143 (VAAEPEVVEAPE) has biased composition (acidic residues). Positions 157-166 (EEPAAPAAPV) are enriched in low complexity. The segment covering 223-248 (AKEDARPTKHVEDLAKLKKPHDKKDE) has biased composition (basic and acidic residues). Over residues 256–267 (KHNKKAGKAVKK) the composition is skewed to basic residues. The 170-residue stretch at 409–578 (PRAPIVTVMG…ALQAELLELS (170 aa)) folds into the tr-type G domain. The interval 418-425 (GHVDHGKT) is G1. 418 to 425 (GHVDHGKT) contributes to the GTP binding site. The tract at residues 443-447 (GITQH) is G2. The segment at 464–467 (DTPG) is G3. Residues 464 to 468 (DTPGH) and 518 to 521 (NKMD) contribute to the GTP site. Positions 518-521 (NKMD) are G4. Residues 554–556 (SAH) are G5.

Belongs to the TRAFAC class translation factor GTPase superfamily. Classic translation factor GTPase family. IF-2 subfamily.

It localises to the cytoplasm. One of the essential components for the initiation of protein synthesis. Protects formylmethionyl-tRNA from spontaneous hydrolysis and promotes its binding to the 30S ribosomal subunits. Also involved in the hydrolysis of GTP during the formation of the 70S ribosomal complex. This is Translation initiation factor IF-2 from Saccharophagus degradans (strain 2-40 / ATCC 43961 / DSM 17024).